A 328-amino-acid chain; its full sequence is Glycerol-3-phosphate dehydrogenase [NAD(P)+] (328 aa).

Residues Trp11, Arg30, and Lys103 each contribute to the NADPH site. Sn-glycerol 3-phosphate-binding residues include Lys103, Gly132, and Ser134. Ala136 serves as a coordination point for NADPH. Residues Lys187, Asp240, Ser250, Arg251, and Asn252 each coordinate sn-glycerol 3-phosphate. Lys187 functions as the Proton acceptor in the catalytic mechanism. Arg251 serves as a coordination point for NADPH. NADPH is bound by residues Val275 and Glu277.

It belongs to the NAD-dependent glycerol-3-phosphate dehydrogenase family.

Its subcellular location is the cytoplasm. The catalysed reaction is sn-glycerol 3-phosphate + NAD(+) = dihydroxyacetone phosphate + NADH + H(+). It catalyses the reaction sn-glycerol 3-phosphate + NADP(+) = dihydroxyacetone phosphate + NADPH + H(+). The protein operates within membrane lipid metabolism; glycerophospholipid metabolism. Catalyzes the reduction of the glycolytic intermediate dihydroxyacetone phosphate (DHAP) to sn-glycerol 3-phosphate (G3P), the key precursor for phospholipid synthesis. The protein is Glycerol-3-phosphate dehydrogenase [NAD(P)+] of Thiobacillus denitrificans (strain ATCC 25259 / T1).